Here is a 1008-residue protein sequence, read N- to C-terminus: ATP-dependent zinc metalloprotease FTSH 12, chloroplastic (1008 aa).

The transit peptide at Met1–Tyr49 directs the protein to the chloroplast. 2 consecutive transmembrane segments (helical) span residues Ala154–Ile174 and Ile427–Ile447. ATP is bound at residue Gly533–Thr540. His769 is a Zn(2+) binding site. Glu770 is a catalytic residue. His773 and Asp849 together coordinate Zn(2+).

It in the N-terminal section; belongs to the AAA ATPase family. In the C-terminal section; belongs to the peptidase M41 family. Zn(2+) serves as cofactor.

Its subcellular location is the plastid. It localises to the chloroplast thylakoid membrane. Its function is as follows. Probable ATP-dependent zinc metallopeptidase. This Arabidopsis thaliana (Mouse-ear cress) protein is ATP-dependent zinc metalloprotease FTSH 12, chloroplastic (FTSH12).